Reading from the N-terminus, the 273-residue chain is 4-hydroxybenzoate octaprenyltransferase (273 aa).

8 consecutive transmembrane segments (helical) span residues 7 to 27 (IGIY…SEGF), 30 to 50 (LKLL…GCVI), 83 to 103 (FFVL…WLTI), 122 to 142 (WTYF…LMAF), 146 to 166 (LNEI…WTVI), 197 to 217 (LIIG…SNVF), 221 to 241 (ISYH…QYLI), and 253 to 273 (FLHN…SVGL).

Belongs to the UbiA prenyltransferase family. Mg(2+) is required as a cofactor.

The protein resides in the cell inner membrane. It catalyses the reaction all-trans-octaprenyl diphosphate + 4-hydroxybenzoate = 4-hydroxy-3-(all-trans-octaprenyl)benzoate + diphosphate. Its pathway is cofactor biosynthesis; ubiquinone biosynthesis. Catalyzes the prenylation of para-hydroxybenzoate (PHB) with an all-trans polyprenyl group. Mediates the second step in the final reaction sequence of ubiquinone-8 (UQ-8) biosynthesis, which is the condensation of the polyisoprenoid side chain with PHB, generating the first membrane-bound Q intermediate 3-octaprenyl-4-hydroxybenzoate. In Vesicomyosocius okutanii subsp. Calyptogena okutanii (strain HA), this protein is 4-hydroxybenzoate octaprenyltransferase.